Here is a 140-residue protein sequence, read N- to C-terminus: uncharacterized protein (140 aa).

Helical transmembrane passes span 63-83 (LGFV…TLAT) and 119-139 (ILLY…IFIN).

It localises to the membrane. This is an uncharacterized protein from Schizosaccharomyces pombe (strain 972 / ATCC 24843) (Fission yeast).